The primary structure comprises 456 residues: Hydroxymethylglutaryl-CoA synthase ERG13 (456 aa).

Position 35 (A35) interacts with (3S)-3-hydroxy-3-methylglutaryl-CoA. The active-site Proton donor/acceptor is E86. Residues C118, N156, T160, S210, H259, K268, N336, and S370 each contribute to the (3S)-3-hydroxy-3-methylglutaryl-CoA site. The Acyl-thioester intermediate role is filled by C118. Residue H259 is the Proton donor/acceptor of the active site.

It belongs to the thiolase-like superfamily. HMG-CoA synthase family.

The enzyme catalyses acetoacetyl-CoA + acetyl-CoA + H2O = (3S)-3-hydroxy-3-methylglutaryl-CoA + CoA + H(+). It functions in the pathway metabolic intermediate biosynthesis; (R)-mevalonate biosynthesis; (R)-mevalonate from acetyl-CoA: step 2/3. Functionally, hydroxymethylglutaryl-CoA synthase; part of the first module of ergosterol biosynthesis pathway that includes the early steps of the pathway, conserved across all eukaryotes, and which results in the formation of mevalonate from acetyl-coenzyme A (acetyl-CoA). ERG13 condenses acetyl-CoA with acetoacetyl-CoA to form hydroxymethylglutaryl-CoA (HMG-CoA). The first module starts with the action of the cytosolic acetyl-CoA acetyltransferase ERG10B that catalyzes the formation of acetoacetyl-CoA. The hydroxymethylglutaryl-CoA synthases ERG13 then condenses acetyl-CoA with acetoacetyl-CoA to form HMG-CoA. The rate-limiting step of the early module is the reduction to mevalonate by the 3-hydroxy-3-methylglutaryl-coenzyme A (HMG-CoA) reductases HMG1. This is Hydroxymethylglutaryl-CoA synthase ERG13 from Gibberella zeae (strain ATCC MYA-4620 / CBS 123657 / FGSC 9075 / NRRL 31084 / PH-1) (Wheat head blight fungus).